A 245-amino-acid chain; its full sequence is 14-3-3 protein theta (245 aa).

Met1 is subject to N-acetylmethionine. Lys3 carries the N6-acetyllysine modification. Lys49 carries the N6-acetyllysine; alternate modification. Lys49 participates in a covalent cross-link: Glycyl lysine isopeptide (Lys-Gly) (interchain with G-Cter in SUMO2); alternate. At Lys68 the chain carries N6-acetyllysine. Tyr82 carries the post-translational modification 3'-nitrotyrosine. Ser92 carries the post-translational modification Phosphoserine. Tyr104 bears the 3'-nitrotyrosine mark. An N6-acetyllysine modification is found at Lys115. Ser232 carries the post-translational modification Phosphoserine; by CK1.

Belongs to the 14-3-3 family. In terms of assembly, homodimer. Interacts with CDKN1B ('Thr-198' phosphorylated form); the interaction translocates CDKN1B to the cytoplasm. Interacts with SSH1. Interacts with GAB2. Interacts with RGS7 (phosphorylated form). Interacts with CDK16. Interacts with the 'Ser-241' phosphorylated form of PDPK1. Interacts with the 'Thr-369' phosphorylated form of DAPK2. Interacts with PI4KB, TBC1D22A and TBC1D22B. Interacts with SLITRK1. Interacts with RIPOR2. Interacts with INAVA; the interaction increases upon PRR (pattern recognition receptor) stimulation and is required for cellular signaling pathway activation and cytokine secretion. Interacts with MARK2, MARK3 and MARK4. Interacts with MEFV.

The protein resides in the cytoplasm. Functionally, adapter protein implicated in the regulation of a large spectrum of both general and specialized signaling pathways. Binds to a large number of partners, usually by recognition of a phosphoserine or phosphothreonine motif. Binding generally results in the modulation of the activity of the binding partner. Negatively regulates the kinase activity of PDPK1. The chain is 14-3-3 protein theta (Ywhaq) from Mus musculus (Mouse).